The chain runs to 243 residues: Transcription factor TFIIS homolog (243 aa).

The 125-residue stretch at 77-201 folds into the TFIIS central domain; the sequence is MRDIIQMMFF…SQQKVAEKTS (125 aa). The segment at 202-242 adopts a TFIIS-type zinc-finger fold; the sequence is QLYKCPNCKQRMCTYREVQTRALDEPSTIFCTCKKCGHEFI. 4 residues coordinate Zn(2+): C206, C209, C234, and C237.

The protein belongs to the TFS-II family.

Functionally, putative initiation factor. Necessary for efficient transcription elongation past template-encoded arresting sites. This Ornithodoros (relapsing fever ticks) protein is Transcription factor TFIIS homolog.